Consider the following 431-residue polypeptide: Levansucrase LscC (431 aa).

5 residues coordinate sucrose: tryptophan 61, aspartate 62, alanine 148, arginine 218, and aspartate 219. The Nucleophile role is filled by aspartate 62. Catalysis depends on glutamate 303, which acts as the Proton donor/acceptor.

Belongs to the glycosyl hydrolase 68 family.

The protein localises to the periplasm. It catalyses the reaction [6)-beta-D-fructofuranosyl-(2-&gt;](n) alpha-D-glucopyranoside + sucrose = [6)-beta-D-fructofuranosyl-(2-&gt;](n+1) alpha-D-glucopyranoside + D-glucose. Its function is as follows. Catalyzes the synthesis of levan, a fructose polymer, by transferring the fructosyl moiety from sucrose to a growing acceptor molecule. The sequence is that of Levansucrase LscC from Pseudomonas savastanoi pv. glycinea (Pseudomonas syringae pv. glycinea).